A 232-amino-acid chain; its full sequence is Ribosomal RNA large subunit methyltransferase E (232 aa).

S-adenosyl-L-methionine is bound by residues Gly64, Trp66, Asp97, Asp113, and Asp138. Residue Lys178 is the Proton acceptor of the active site.

The protein belongs to the class I-like SAM-binding methyltransferase superfamily. RNA methyltransferase RlmE family.

The protein resides in the cytoplasm. The catalysed reaction is uridine(2552) in 23S rRNA + S-adenosyl-L-methionine = 2'-O-methyluridine(2552) in 23S rRNA + S-adenosyl-L-homocysteine + H(+). Its function is as follows. Specifically methylates the uridine in position 2552 of 23S rRNA at the 2'-O position of the ribose in the fully assembled 50S ribosomal subunit. The polypeptide is Ribosomal RNA large subunit methyltransferase E (Leptothrix cholodnii (strain ATCC 51168 / LMG 8142 / SP-6) (Leptothrix discophora (strain SP-6))).